The chain runs to 159 residues: Ribosome maturation factor RimP (159 aa).

The protein belongs to the RimP family.

The protein resides in the cytoplasm. In terms of biological role, required for maturation of 30S ribosomal subunits. This is Ribosome maturation factor RimP from Streptococcus pneumoniae (strain 70585).